Consider the following 615-residue polypeptide: Semenogelin-1 (615 aa).

Residues 1-23 form the signal peptide; that stretch reads MKPIIFLVLSLLLILEKQAAVMG. The residue at position 24 (glutamine 24) is a Pyrrolidone carboxylic acid. Disordered stretches follow at residues 24-118, 133-160, and 172-585; these read QKGG…EHGK, GHAP…SQDS, and GKEQ…HRSY. The span at 34–46 shows a compositional bias: polar residues; it reads SESSQFPHGQKGQ. The segment covering 50 to 80 has biased composition (basic and acidic residues); it reads ARKDKQHAESKRSVSIEHTYHVDIPDHDQTR. Over residues 81-91 the composition is skewed to polar residues; the sequence is TSKQYDLNAQN. Over residues 107 to 118 the composition is skewed to basic and acidic residues; the sequence is FNHKQEGREHGK. 3 stretches are compositionally biased toward polar residues: residues 138–160, 177–196, and 209–224; these read GTQN…SQDS, SVSG…SPVL, and TQNS…NVNE. Asparagine 148, asparagine 184, and asparagine 223 each carry an N-linked (GlcNAc...) asparagine glycan. Residues 241–253 are compositionally biased toward basic and acidic residues; it reads QEDRLQHGSKDVF. The span at 254–265 shows a compositional bias: polar residues; that stretch reads SKNQNQTRNPNQ. Residues asparagine 258 and asparagine 275 are each glycosylated (N-linked (GlcNAc...) asparagine). Over residues 283–300 the composition is skewed to basic and acidic residues; it reads TEERRPNHGEKGIQKDAS. Asparagine 306 is a glycosylation site (N-linked (GlcNAc...) asparagine). Basic and acidic residues predominate over residues 308–317; it reads TEDKMHDKSQ. Residue asparagine 332 is glycosylated (N-linked (GlcNAc...) asparagine). Basic and acidic residues predominate over residues 341 to 358; the sequence is TEERRPNHGEKGIQKDAS. The N-linked (GlcNAc...) asparagine glycan is linked to asparagine 364. Basic and acidic residues predominate over residues 366–375; it reads TEDKMHDKSQ. Asparagine 390 carries an N-linked (GlcNAc...) asparagine glycan. Over residues 399–416 the composition is skewed to basic and acidic residues; it reads TEERRPNHGEKGIQKDAS. The N-linked (GlcNAc...) asparagine glycan is linked to asparagine 422. Positions 424–433 are enriched in basic and acidic residues; it reads TEDKMHDKSQ. An N-linked (GlcNAc...) asparagine glycan is attached at asparagine 448. The span at 457-474 shows a compositional bias: basic and acidic residues; that stretch reads TEERRPNHGEKGIQKDAS. Residue asparagine 480 is glycosylated (N-linked (GlcNAc...) asparagine). Basic and acidic residues predominate over residues 481-491; the sequence is KTEDKMHDKSQ. Asparagine 506 is a glycosylation site (N-linked (GlcNAc...) asparagine). The segment covering 515–532 has biased composition (basic and acidic residues); the sequence is TEERRPNHGEKGIQKDAS. Residue asparagine 538 is glycosylated (N-linked (GlcNAc...) asparagine). The span at 539-549 shows a compositional bias: basic and acidic residues; it reads KTEDEKHDKSQ. The span at 550–563 shows a compositional bias: polar residues; the sequence is KQVTTPSQDQQSGQ.

This sequence belongs to the semenogelin family. Occurs in disulfide-linked complexes. Post-translationally, transglutaminase substrate. In terms of processing, rapidly cleaved after ejaculation by KLK3/PSA, resulting in liquefaction of the semen coagulum and the progressive release of motile spermatozoa.

Its subcellular location is the secreted. Functionally, predominant protein in semen. It participates in the formation of a gel matrix entrapping the accessory gland secretions and ejaculated spermatozoa. Fragments of semenogelin and/or fragments of the related proteins may contribute to the activation of progressive sperm movements as the gel-forming proteins are fragmented by KLK3/PSA. The protein is Semenogelin-1 (SEMG1) of Saguinus oedipus (Cotton-top tamarin).